A 326-amino-acid polypeptide reads, in one-letter code: MEKDGLCRADQQYECVAEIGEGAYGKVFKARDLKNGGRFVALKRVRVQTGEEGMPLSTIREVAVLRHLETFEHPNVVRLFDVCTVSRTDRETKLTLVFEHVDQDLTTYLDKVPEPGVPTETIKDMMFQLLRGLDFLHSHRVVHRDLKPQNILVTSSGQIKLADFGLARIYSFQMALTSVVVTLWYRAPEVLLQSSYATPVDLWSVGCIFAEMFRRKPLFRGSSDVDQLGKILDVIGLPGEEDWPRDVALPRQAFHSKSAQPIEKFVTDIDELGKDLLLKCLTFNPAKRISAYSALSHPYFQDLERCKENLDSHLPPSQNTSELNTA.

Residue Met-1 is modified to N-acetylmethionine. Tyr-13 and Tyr-24 each carry phosphotyrosine. The Protein kinase domain occupies 13–300 (YECVAEIGEG…AYSALSHPYF (288 aa)). ATP is bound by residues 19 to 27 (IGEGAYGKV) and Lys-43. Residues Thr-49 and Thr-70 each carry the phosphothreonine modification. Asp-145 (proton acceptor) is an active-site residue. Thr-177 is modified (phosphothreonine). Lys-264 carries the post-translational modification N6-acetyllysine. Thr-325 is subject to Phosphothreonine.

Belongs to the protein kinase superfamily. CMGC Ser/Thr protein kinase family. CDC2/CDKX subfamily. Interaction with D-type G1 cyclins. Cyclin binding promotes enzyme activation by phosphorylation at Thr-177. Binds to RUNX1, CDKN2D, FBXO7 and CDKN2C/p18-INK4c. Forms a cytoplasmic complex with Hsp90/HSP90AB1 and CDC37. FBXO7-binding promotes D-type cyclin binding. Interacts with Kaposi's sarcoma herpesvirus (KSHV) V-cyclin and herpesvirus saimiri (V-cyclin/ECLF2); the CDK6/V-cyclin complex phosphorylates NPM1 and thus lead to viral reactivation by reducing viral LANA levels. Post-translationally, thr-177 phosphorylation and Tyr-24 dephosphorylation promotes kinase activity. As to expression, expressed ubiquitously. Accumulates in squamous cell carcinomas, proliferating hematopoietic progenitor cells, beta-cells of pancreatic islets of Langerhans, and neuroblastomas. Reduced levels in differentiating cells.

Its subcellular location is the cytoplasm. It localises to the nucleus. The protein resides in the cell projection. The protein localises to the ruffle. It is found in the cytoskeleton. Its subcellular location is the microtubule organizing center. It localises to the centrosome. The enzyme catalyses L-seryl-[protein] + ATP = O-phospho-L-seryl-[protein] + ADP + H(+). The catalysed reaction is L-threonyl-[protein] + ATP = O-phospho-L-threonyl-[protein] + ADP + H(+). Its activity is regulated as follows. Inhibited by INK4 proteins (CDKN2C/p18-INK4c), aminopurvalanol, PD0332991, 4-(Pyrazol-4-yl)-pyrimidines and fisetin, a flavonol inhibitor. Activated by Thr-177 phosphorylation and Tyr-24 dephosphorylation. Stimulated by cyclin from herpesvirus saimiri (V-cyclin/ECLF2). Rapidly down-regulated prior to cell differentiation (e.g. erythroid and osteoblast). In terms of biological role, serine/threonine-protein kinase involved in the control of the cell cycle and differentiation; promotes G1/S transition. Phosphorylates pRB/RB1 and NPM1. Interacts with D-type G1 cyclins during interphase at G1 to form a pRB/RB1 kinase and controls the entrance into the cell cycle. Involved in initiation and maintenance of cell cycle exit during cell differentiation; prevents cell proliferation and negatively regulates cell differentiation, but is required for the proliferation of specific cell types (e.g. erythroid and hematopoietic cells). Essential for cell proliferation within the dentate gyrus of the hippocampus and the subventricular zone of the lateral ventricles. Required during thymocyte development. Promotes the production of newborn neurons, probably by modulating G1 length. Promotes, at least in astrocytes, changes in patterns of gene expression, changes in the actin cytoskeleton including loss of stress fibers, and enhanced motility during cell differentiation. Prevents myeloid differentiation by interfering with RUNX1 and reducing its transcription transactivation activity, but promotes proliferation of normal myeloid progenitors. Delays senescence. Promotes the proliferation of beta-cells in pancreatic islets of Langerhans. May play a role in the centrosome organization during the cell cycle phases. The sequence is that of Cyclin-dependent kinase 6 (CDK6) from Homo sapiens (Human).